The chain runs to 400 residues: GTPase Obg (400 aa).

An Obg domain is found at 1-159 (MKFVDEVQIR…RTLKLELLLL (159 aa)). The 174-residue stretch at 160-333 (ADVGMLGLPN…VCYDILDLLD (174 aa)) folds into the OBG-type G domain. Residues 166–173 (GLPNAGKS), 191–195 (FTTLV), 213–216 (DIPG), 283–286 (NKMD), and 314–316 (SAI) each bind GTP. Positions 173 and 193 each coordinate Mg(2+).

It belongs to the TRAFAC class OBG-HflX-like GTPase superfamily. OBG GTPase family. Monomer. It depends on Mg(2+) as a cofactor.

It is found in the cytoplasm. In terms of biological role, an essential GTPase which binds GTP, GDP and possibly (p)ppGpp with moderate affinity, with high nucleotide exchange rates and a fairly low GTP hydrolysis rate. Plays a role in control of the cell cycle, stress response, ribosome biogenesis and in those bacteria that undergo differentiation, in morphogenesis control. The protein is GTPase Obg of Aeromonas salmonicida (strain A449).